Here is a 196-residue protein sequence, read N- to C-terminus: UMP-CMP kinase (196 aa).

13–18 (GAGKGT) provides a ligand contact to ATP. Position 33 is a phosphoserine (Ser33). The segment at 33–63 (SAGELLRDERKNPDSQYGELIEKYIKEGKIV) is NMP. Arg39 contributes to the a ribonucleoside 5'-phosphate binding site. N6-acetyllysine occurs at positions 43 and 55. 61–63 (KIV) provides a ligand contact to a ribonucleoside 5'-phosphate. A Glycyl lysine isopeptide (Lys-Gly) (interchain with G-Cter in SUMO2) cross-link involves residue Lys73. 93-96 (GFPR) lines the a ribonucleoside 5'-phosphate pocket. Asn100 lines the CMP pocket. An N6-succinyllysine modification is found at Lys106. Positions 133–143 (ERGKSSGRSDD) are LID. Residue Arg134 participates in ATP binding. A ribonucleoside 5'-phosphate-binding residues include Arg140 and Arg151. Lys179 is an ATP binding site. The residue at position 180 (Ser180) is a Phosphoserine.

This sequence belongs to the adenylate kinase family. UMP-CMP kinase subfamily. Monomer. The cofactor is Mg(2+). In terms of tissue distribution, ubiquitously expressed.

It is found in the nucleus. It localises to the cytoplasm. The catalysed reaction is CMP + ATP = CDP + ADP. It catalyses the reaction dCMP + ATP = dCDP + ADP. The enzyme catalyses UMP + ATP = UDP + ADP. It carries out the reaction a 2'-deoxyribonucleoside 5'-diphosphate + ATP = a 2'-deoxyribonucleoside 5'-triphosphate + ADP. The catalysed reaction is a ribonucleoside 5'-diphosphate + ATP = a ribonucleoside 5'-triphosphate + ADP. Its function is as follows. Catalyzes the phosphorylation of pyrimidine nucleoside monophosphates at the expense of ATP. Plays an important role in de novo pyrimidine nucleotide biosynthesis. Has preference for UMP and CMP as phosphate acceptors. Also displays broad nucleoside diphosphate kinase activity. This is UMP-CMP kinase from Homo sapiens (Human).